The primary structure comprises 788 residues: Integrin beta-6 (788 aa).

Residues 1–21 form the signal peptide; that stretch reads MGIELLCLFFLFLGRNDHVQG. In terms of domain architecture, PSI spans 22–71; sequence GCALGGAETCEDCLLIGPQCAWCSQENFTYLSGVGERCDTPANLLAKGCQ. The Extracellular portion of the chain corresponds to 22–709; the sequence is GCALGGAETC…KDCPKPPNSP (688 aa). Disulfide bonds link Cys-23–Cys-41, Cys-31–Cys-454, Cys-34–Cys-59, Cys-44–Cys-70, Cys-197–Cys-204, Cys-252–Cys-293, Cys-394–Cys-406, Cys-426–Cys-452, Cys-456–Cys-476, Cys-467–Cys-479, Cys-481–Cys-490, Cys-492–Cys-519, Cys-502–Cys-517, Cys-511–Cys-522, Cys-524–Cys-537, Cys-539–Cys-560, Cys-544–Cys-558, Cys-552–Cys-563, Cys-565–Cys-574, Cys-576–Cys-599, Cys-583–Cys-597, Cys-591–Cys-602, Cys-604–Cys-614, Cys-617–Cys-620, Cys-624–Cys-670, Cys-630–Cys-649, Cys-633–Cys-645, and Cys-678–Cys-702. Asn-48 and Asn-97 each carry an N-linked (GlcNAc...) asparagine glycan. In terms of domain architecture, VWFA spans 131–371; the sequence is YPVDLYYLMD…QLIISAYEEL (241 aa). Mg(2+) is bound by residues Asp-140, Ser-142, and Ser-144. The Ca(2+) site is built by Ser-144, Asp-147, Asp-148, and Glu-179. The Ca(2+) site is built by Asn-235, Asp-237, Pro-239, and Glu-240. Glu-240 lines the Mg(2+) pocket. N-linked (GlcNAc...) asparagine glycosylation is present at Asn-260. Residues Asp-271 and Lys-355 each coordinate Ca(2+). Asn-387 carries N-linked (GlcNAc...) asparagine glycosylation. N-linked (GlcNAc...) asparagine glycosylation occurs at Asn-418. I-EGF domains follow at residues 456 to 491, 492 to 538, 539 to 575, and 576 to 615; these read CQKE…PHCE, CGED…PYCQ, CDDF…EYCN, and CTTS…LTCE. N-linked (GlcNAc...) asparagine glycans are attached at residues Asn-463 and Asn-471. A helical membrane pass occupies residues 710 to 730; the sequence is MIMLGVSLAILLIGVVLLCIW. The tract at residues 731 to 758 is interaction with HAX1; that stretch reads KLLVSFHDRKEVAKFEAERSKAKWQTGT. Topologically, residues 731–788 are cytoplasmic; sequence KLLVSFHDRKEVAKFEAERSKAKWQTGTNPLYRGSTSTFKNVTYKHREKQKVDLSMDG.

The protein belongs to the integrin beta chain family. In terms of assembly, heterodimer of an alpha and a beta subunit. Interacts with FLNB. Interacts with HAX1. ITGAV:ITGB6 interacts with FBN1. ITGAV:ITGB6 interacts with TGFB1.

The protein resides in the cell membrane. The protein localises to the cell junction. Its subcellular location is the focal adhesion. Its function is as follows. Integrin alpha-V:beta-6 (ITGAV:ITGB6) is a receptor for fibronectin and cytotactin. It recognizes the sequence R-G-D in its ligands. ITGAV:ITGB6 acts as a receptor for fibrillin-1 (FBN1) and mediates R-G-D-dependent cell adhesion to FBN1. Integrin alpha-V:beta-6 (ITGAV:ITGB6) mediates R-G-D-dependent release of transforming growth factor beta-1 (TGF-beta-1) from regulatory Latency-associated peptide (LAP), thereby playing a key role in TGF-beta-1 activation. The chain is Integrin beta-6 (ITGB6) from Sus scrofa (Pig).